Consider the following 411-residue polypeptide: Actin-like protein 9 (411 aa).

Positions 1-15 are enriched in basic and acidic residues; that stretch reads MDVNGPKRWEPHRSL. Positions 1–23 are disordered; it reads MDVNGPKRWEPHRSLDLNPRSTP.

This sequence belongs to the actin family. In terms of assembly, interacts with ACTL7A.

It is found in the cytoplasmic vesicle. It localises to the secretory vesicle. Its subcellular location is the acrosome. The protein resides in the cytoplasm. The protein localises to the cytoskeleton. It is found in the perinuclear theca. Testis-specic protein that plays an important role in fusion of proacrosomal vesicles and perinuclear theca formation. This chain is Actin-like protein 9 (Actl9), found in Rattus norvegicus (Rat).